The following is a 109-amino-acid chain: MEVKAIVKDTGYSALKVRLCVDLVRGKKVSEAITLLRFMTSPTAKVVSKVIKSAAANAENNFQMNPADLKISQIYADEARMLKRMRPQARGRVSPILKRSSHITVVVAD.

The protein belongs to the universal ribosomal protein uL22 family. As to quaternary structure, part of the 50S ribosomal subunit.

Functionally, this protein binds specifically to 23S rRNA; its binding is stimulated by other ribosomal proteins, e.g. L4, L17, and L20. It is important during the early stages of 50S assembly. It makes multiple contacts with different domains of the 23S rRNA in the assembled 50S subunit and ribosome. In terms of biological role, the globular domain of the protein is located near the polypeptide exit tunnel on the outside of the subunit, while an extended beta-hairpin is found that lines the wall of the exit tunnel in the center of the 70S ribosome. The polypeptide is Large ribosomal subunit protein uL22 (Dehalococcoides mccartyi (strain ATCC BAA-2100 / JCM 16839 / KCTC 5957 / BAV1)).